A 374-amino-acid chain; its full sequence is Putative L-lysine 2,3-aminomutase aq_1632 (374 aa).

The 229-residue stretch at 86 to 314 (HKYPDTALLL…ARVRYVMSHE (229 aa)) folds into the Radical SAM core domain. Positions 100, 104, and 107 each coordinate [4Fe-4S] cluster. Lysine 317 carries the N6-(pyridoxal phosphate)lysine modification.

This sequence belongs to the radical SAM superfamily. KamA family. The cofactor is [4Fe-4S] cluster. Pyridoxal 5'-phosphate serves as cofactor.

The chain is Putative L-lysine 2,3-aminomutase aq_1632 from Aquifex aeolicus (strain VF5).